The primary structure comprises 98 residues: NADH-ubiquinone oxidoreductase chain 4L (98 aa).

3 helical membrane passes run 1–21 (MSLIHMNIIMAFTLSLVGLLM), 29–49 (ALLCMEGMMLSLFILATLTAL), and 59–79 (MPIILLVFAACEAAIGLALLV).

It belongs to the complex I subunit 4L family. As to quaternary structure, core subunit of respiratory chain NADH dehydrogenase (Complex I) which is composed of 45 different subunits.

The protein resides in the mitochondrion inner membrane. It carries out the reaction a ubiquinone + NADH + 5 H(+)(in) = a ubiquinol + NAD(+) + 4 H(+)(out). Functionally, core subunit of the mitochondrial membrane respiratory chain NADH dehydrogenase (Complex I) which catalyzes electron transfer from NADH through the respiratory chain, using ubiquinone as an electron acceptor. Part of the enzyme membrane arm which is embedded in the lipid bilayer and involved in proton translocation. The sequence is that of NADH-ubiquinone oxidoreductase chain 4L (MT-ND4L) from Hyperoodon ampullatus (Northern bottlenose whale).